The chain runs to 556 residues: PPE family protein PPE2 (556 aa).

The segment at 8 to 164 (ASPPEVHSAL…ASYQAVSTAA (157 aa)) is PPE. Positions 201–256 (QKIGYTDFYNNVIQPFINWLTNLPFLQAMFSGFDPWLPSLGNPLTFLSPANIAFAL) are SH3-like. The segment at 319-340 (LEQTLALLPAALPLLAAPLAPL) is leucine zipper motif. Disordered stretches follow at residues 385–418 (TPTP…PPVT) and 443–556 (GTGV…TRVE). Residues 400 to 417 (PTPPLGPPPPPVTAPPPV) are compositionally biased toward pro residues. The segment covering 456-471 (AEAPASAAAPEEQVQP) has biased composition (low complexity). Basic residues predominate over residues 472–481 (QRRRRPKIKQ). The short motif at 473 to 481 (RRRRPKIKQ) is the Nuclear localization signal element.

This sequence belongs to the mycobacterial PPE family.

It localises to the secreted. The protein resides in the host cytoplasm. Its subcellular location is the host nucleus. Inhibits nitric oxide (NO) production in activated macrophages. Acts by inhibiting expression of the host inducible nitric oxide synthase (iNOS). PPE2 is translocated into the host macrophage nucleus, where it interacts with a GATA-binding site overlapping with the TATA box of NOS2 (iNOS) promoter, and strongly inhibits NOS2 gene transcription. Reduction in NO production in turn facilitates intracellular survival of the bacilli inside the macrophage. In addition, disrupts the assembly of NADPH oxidase complex, which inhibits NADPH oxidase-mediated reactive oxygen species (ROS) generation in macrophages and favors M.tuberculosis survival. Acts by interacting with NCF2, the cytosolic subunit of NADPH oxidase, and preventing translocation of NCF2 and NCF1 to the membrane, which causes a reduction of the functional assembly of NADPH oxidase complex and a decrease in NADPH oxidase activity. The chain is PPE family protein PPE2 (PPE2) from Mycobacterium tuberculosis (strain CDC 1551 / Oshkosh).